The primary structure comprises 240 residues: Uridylate kinase (240 aa).

13–16 contributes to the ATP binding site; it reads KASG. An involved in allosteric activation by GTP region spans residues 21 to 26; the sequence is GSQGFG. Position 55 (Gly-55) interacts with UMP. The ATP site is built by Gly-56 and Arg-60. UMP contacts are provided by residues Asp-75 and 136-143; that span reads TGNPFFTT. Thr-163, Gln-164, Tyr-169, and Asp-172 together coordinate ATP.

It belongs to the UMP kinase family. As to quaternary structure, homohexamer.

Its subcellular location is the cytoplasm. The catalysed reaction is UMP + ATP = UDP + ADP. The protein operates within pyrimidine metabolism; CTP biosynthesis via de novo pathway; UDP from UMP (UMPK route): step 1/1. Allosterically activated by GTP. Inhibited by UTP. Catalyzes the reversible phosphorylation of UMP to UDP. This Rhizobium meliloti (strain 1021) (Ensifer meliloti) protein is Uridylate kinase.